Consider the following 909-residue polypeptide: Golgin subfamily A member 6-like protein 2 (909 aa).

A compositionally biased stretch (pro residues) spans 1–11 (MWPQPHLPPHP). Disordered stretches follow at residues 1 to 88 (MWPQ…ASHQ), 300 to 362 (ERLR…EQEE), 381 to 408 (QEKQMREQEQKMRDQEERMWEQDERLRE), 425 to 494 (KMRE…QRLP), and 524 to 909 (EEMW…QSSL). The span at 13–31 (MSEKTRQNKLAEAKKKFTD) shows a compositional bias: basic and acidic residues. Residues 53-77 (NNGTNPETTTSEGCHSPEDTQQNRA) are compositionally biased toward polar residues. Residues 78 to 88 (QLKEEKKASHQ) show a composition bias toward basic and acidic residues. Residues 192–526 (HKKADRYIEE…EEKIRDQEEM (335 aa)) are a coiled coil. 2 stretches are compositionally biased toward basic and acidic residues: residues 425-478 (KMRE…KQEE) and 524-542 (EEMWGQEKKMWRQEKMREQ). Residues 607-620 (AGGEEDAGAGEEDM) show a composition bias toward acidic residues. Composition is skewed to gly residues over residues 641-654 (GGGGDDAGAGGEDA) and 676-689 (GAGGEDVGAGGEDV). Residues 692–719 (GRRRCGSSRGCRNRRRSCGNTRRCRSRR) are compositionally biased toward basic residues. Positions 746–755 (AGAEDVAAGG) are enriched in low complexity. Positions 757 to 766 (DAGEEEDAGG) are enriched in acidic residues. A compositionally biased stretch (gly residues) spans 791–871 (GAGGEDVGAG…AGGEDVGAGG (81 aa)). The segment covering 872-892 (DAREGGEDTRSEREDAGEAAR) has biased composition (basic and acidic residues).

Belongs to the GOLGA6 family.

This Homo sapiens (Human) protein is Golgin subfamily A member 6-like protein 2 (GOLGA6L2).